The sequence spans 486 residues: Ribulose bisphosphate carboxylase large chain 3 (486 aa).

2 residues coordinate substrate: Asn125 and Thr175. The active-site Proton acceptor is Lys177. Residue Lys179 coordinates substrate. Residues Lys203, Asp205, and Glu206 each coordinate Mg(2+). Lys203 is modified (N6-carboxylysine). Residue His295 is the Proton acceptor of the active site. Residues Arg296, His328, and Ser380 each contribute to the substrate site.

It belongs to the RuBisCO large chain family. Type I subfamily. In terms of assembly, heterohexadecamer of 8 large chains and 8 small chains. Mg(2+) serves as cofactor.

The enzyme catalyses 2 (2R)-3-phosphoglycerate + 2 H(+) = D-ribulose 1,5-bisphosphate + CO2 + H2O. The catalysed reaction is D-ribulose 1,5-bisphosphate + O2 = 2-phosphoglycolate + (2R)-3-phosphoglycerate + 2 H(+). RuBisCO catalyzes two reactions: the carboxylation of D-ribulose 1,5-bisphosphate, the primary event in carbon dioxide fixation, as well as the oxidative fragmentation of the pentose substrate. Both reactions occur simultaneously and in competition at the same active site. This Bradyrhizobium sp. (strain BTAi1 / ATCC BAA-1182) protein is Ribulose bisphosphate carboxylase large chain 3.